A 183-amino-acid polypeptide reads, in one-letter code: Neuroblastoma suppressor of tumorigenicity 1 (183 aa).

A signal peptide spans 1–19 (MVMCVRAVLVCVLLELSRA). 5 cysteine pairs are disulfide-bonded: C38–C88, C52–C102, C62–C121, C66–C123, and C85–C126. Residues 38–127 (CEAKNITQIV…ILHCSCQSCS (90 aa)) enclose the CTCK domain. Residues 145–170 (AQDLPSLPDATHTHPQHAHMQADQRD) form a disordered region.

It belongs to the DAN family.

Its subcellular location is the secreted. Its function is as follows. May act as a tumor suppressor. The sequence is that of Neuroblastoma suppressor of tumorigenicity 1 (nbl1) from Danio rerio (Zebrafish).